Consider the following 539-residue polypeptide: MALQSQASEEAKGPWQEADQEQQEPVGSPEPESEPEPEPEPEPVPVPPPEPQPEPQPLPDPAPLPELEFESERVHEPEPTPTVETRGTARGFQPPEGGFGWVVVFAATWCNGSIFGIHNSVGILYSMLLEEEKEKNRQVEFQAAWVGALAMGMIFFCSPIVSIFTDRLGCRITATAGAAVAFIGLHTSSFTSSLSLRYFTYGILFGCGCSFAFQPSLVILGHYFQRRLGLANGVVSAGSSIFSMSFPFLIRMLGDKIKLAQTFQVLSTFMFVLMLLSLTYRPLLPSSQDTPSKRGVRTLHQRFLAQLRKYFNMRVFRQRTYRIWAFGIAAAALGYFVPYVHLMKYVEEEFSEIKETWVLLVCIGATSGLGRLVSGHISDSIPGLKKIYLQVLSFLLLGLMSMMIPLCRDFGGLIVVCLFLGLCDGFFITIMAPIAFELVGPMQASQAIGYLLGMMALPMIAGPPIAGLLRNCFGDYHVAFYFAGVPPIIGAVILFFVPLMHQRMFKKEQRDSSKDKMLAPDPDPNGELLPGSPNPEEPI.

The segment at 1–92 (MALQSQASEE…VETRGTARGF (92 aa)) is disordered. Alanine 2 bears the N-acetylalanine mark. Over 2 to 96 (ALQSQASEEA…GTARGFQPPE (95 aa)) the chain is Cytoplasmic. Residues 31-41 (PESEPEPEPEP) show a composition bias toward acidic residues. The span at 42-64 (EPVPVPPPEPQPEPQPLPDPAPL) shows a compositional bias: pro residues. A helical transmembrane segment spans residues 97 to 117 (GGFGWVVVFAATWCNGSIFGI). The Extracellular segment spans residues 118 to 143 (HNSVGILYSMLLEEEKEKNRQVEFQA). The chain crosses the membrane as a helical span at residues 144 to 164 (AWVGALAMGMIFFCSPIVSIF). Topologically, residues 165 to 171 (TDRLGCR) are cytoplasmic. The chain crosses the membrane as a helical span at residues 172 to 192 (ITATAGAAVAFIGLHTSSFTS). Over 193–200 (SLSLRYFT) the chain is Extracellular. The chain crosses the membrane as a helical span at residues 201 to 221 (YGILFGCGCSFAFQPSLVILG). The Cytoplasmic segment spans residues 222–229 (HYFQRRLG). Residues 230-250 (LANGVVSAGSSIFSMSFPFLI) traverse the membrane as a helical segment. The Extracellular portion of the chain corresponds to 251–258 (RMLGDKIK). The chain crosses the membrane as a helical span at residues 259 to 279 (LAQTFQVLSTFMFVLMLLSLT). The Cytoplasmic portion of the chain corresponds to 280-322 (YRPLLPSSQDTPSKRGVRTLHQRFLAQLRKYFNMRVFRQRTYR). The chain crosses the membrane as a helical span at residues 323-343 (IWAFGIAAAALGYFVPYVHLM). The Extracellular portion of the chain corresponds to 344–356 (KYVEEEFSEIKET). A helical membrane pass occupies residues 357 to 377 (WVLLVCIGATSGLGRLVSGHI). At 378–386 (SDSIPGLKK) the chain is on the cytoplasmic side. A helical transmembrane segment spans residues 387 to 407 (IYLQVLSFLLLGLMSMMIPLC). Topologically, residues 408 to 409 (RD) are extracellular. A helical transmembrane segment spans residues 410 to 430 (FGGLIVVCLFLGLCDGFFITI). Over 431–447 (MAPIAFELVGPMQASQA) the chain is Cytoplasmic. A helical transmembrane segment spans residues 448–468 (IGYLLGMMALPMIAGPPIAGL). At 469–477 (LRNCFGDYH) the chain is on the extracellular side. The helical transmembrane segment at 478-498 (VAFYFAGVPPIIGAVILFFVP) threads the bilayer. Residues 499-539 (LMHQRMFKKEQRDSSKDKMLAPDPDPNGELLPGSPNPEEPI) lie on the Cytoplasmic side of the membrane. Positions 508–518 (EQRDSSKDKML) are enriched in basic and acidic residues. Residues 508-539 (EQRDSSKDKMLAPDPDPNGELLPGSPNPEEPI) form a disordered region.

This sequence belongs to the major facilitator superfamily. Monocarboxylate porter (TC 2.A.1.13) family. Monomer. Homodimer. Homooligomer. As to expression, highly expressed in liver and heart. In adult brain tissue expression is largely confined to endothelial cells of the blood-brain barrier (at protein level).

The protein localises to the cell membrane. It is found in the apical cell membrane. It catalyses the reaction 3,3',5-triiodo-L-thyronine(out) = 3,3',5-triiodo-L-thyronine(in). It carries out the reaction L-thyroxine(out) = L-thyroxine(in). The enzyme catalyses 3,3',5'-triiodo-L-thyronine(out) = 3,3',5'-triiodo-L-thyronine(in). The catalysed reaction is 3,3'-diiodo-L-thyronine(out) = 3,3'-diiodo-L-thyronine(in). Specific thyroid hormone transmembrane transporter, that mediates both uptake and efflux of thyroid hormones across the cell membrane independently of pH or a Na(+) gradient. Major substrates are the iodothyronines T3 and T4 and to a lesser extent rT3 and 3,3-diiodothyronine (3,3'-T2). Acts as an important mediator of thyroid hormone transport, especially T3, through the blood-brain barrier. In Homo sapiens (Human), this protein is Monocarboxylate transporter 8 (SLC16A2).